The primary structure comprises 337 residues: 15-cis-phytoene synthase (337 aa).

Belongs to the phytoene/squalene synthase family. ATP serves as cofactor. Requires Mn(2+) as cofactor. Mg(2+) is required as a cofactor.

It carries out the reaction 2 (2E,6E,10E)-geranylgeranyl diphosphate = 15-cis-phytoene + 2 diphosphate. Its pathway is carotenoid biosynthesis; phytoene biosynthesis. Its function is as follows. Involved in the biosynthesis of carotenoids. Catalyzes the condensation of two molecules of geranylgeranyl diphosphate (GGPP) to give prephytoene diphosphate (PPPP) and the subsequent rearrangement of the cyclopropylcarbinyl intermediate to yield 15-cis-phytoene. The protein is 15-cis-phytoene synthase (crtB) of Synechocystis sp. (strain ATCC 27184 / PCC 6803 / Kazusa).